The primary structure comprises 292 residues: 2-(5''-triphosphoribosyl)-3'-dephosphocoenzyme-A synthase (292 aa).

Belongs to the CitG/MdcB family.

It carries out the reaction 3'-dephospho-CoA + ATP = 2'-(5''-triphospho-alpha-D-ribosyl)-3'-dephospho-CoA + adenine. Functionally, catalyzes the formation of 2-(5''-triphosphoribosyl)-3'-dephosphocoenzyme-A, the precursor of the prosthetic group of the holo-acyl carrier protein (gamma chain) of citrate lyase, from ATP and dephospho-CoA. The chain is 2-(5''-triphosphoribosyl)-3'-dephosphocoenzyme-A synthase from Escherichia coli O139:H28 (strain E24377A / ETEC).